The sequence spans 309 residues: Protein FdhE (309 aa).

Belongs to the FdhE family.

The protein localises to the cytoplasm. Necessary for formate dehydrogenase activity. The chain is Protein FdhE from Escherichia coli O139:H28 (strain E24377A / ETEC).